Reading from the N-terminus, the 58-residue chain is Putative antitoxin VapB16 (58 aa).

Putative antitoxin component of a possible type II toxin-antitoxin (TA) system. The cognate toxin is VapC16. This chain is Putative antitoxin VapB16 (vapB16), found in Mycobacterium tuberculosis (strain ATCC 25618 / H37Rv).